The following is a 706-amino-acid chain: MSKVRVYQLAKELGVSSKELIIKLKDLSIEVGNHMSTLNDDDANLLIELFTEDNKEVNSDSNQESKVNTDDKLDKIDKPNKIENAPSEENPKKNKKSKKKQKNKKKGPTMKDEKGLIEENTDEQILEIGESIILKDLTHMLDKTPTEVITKLIGLGMMVTINQEIDFDTAAMVASEYGVELKQAGVMDDSDVVDDLIIPEDDEKDLMSRPPVVTVMGHVDHGKTSLLDAIRKTKVTAKEAGGITQHIGASEIQINDKKIVFLDTPGHEAFTSMRARGAKVTDIAILVVAADDGVMPQTIEAINHAKAAEVPIIVAINKIDKPGANQDRVKQELSDHGILIEAWGGDVIAVPVSAIEGTNINELLEMILLVSEVEEFKANPNRQAIGVVIEAKLDKGKGTVATVLIQNGTLHVGDSVVVGSTYGRIRAMTNHVGEKLREATPSTAVEITGLSDVPEAGNQLVVVADDKMARNTAEKRAHKAKVAQQKITQRVSLDDLYNQMQQGEIKELNIIVKADVQGSVQAVKQSLEKLSNDKVSLRTIHGGVGAITESDVMLAAASNAIITGFNVRPTSTATAISKKEKVDIRTYRIIYNAIEDIEAAMVGMLDPEFKEVDLGKAEVRAAFKVPGAGVVAGSYITEGKILRSASIRLVRDGIVVHEGAIGSLRRFKDDVKEVNTGYECGIGIDKFNDVKEGDIIEAYTMEEIKR.

A disordered region spans residues 55 to 117 (KEVNSDSNQE…PTMKDEKGLI (63 aa)). A compositionally biased stretch (basic and acidic residues) spans 67-81 (VNTDDKLDKIDKPNK). Residues 93–108 (KNKKSKKKQKNKKKGP) show a composition bias toward basic residues. The tr-type G domain maps to 208-375 (SRPPVVTVMG…MILLVSEVEE (168 aa)). The tract at residues 217 to 224 (GHVDHGKT) is G1. 217–224 (GHVDHGKT) is a binding site for GTP. Residues 242–246 (GITQH) form a G2 region. Residues 263 to 266 (DTPG) are G3. Residues 263–267 (DTPGH) and 317–320 (NKID) each bind GTP. The interval 317–320 (NKID) is G4. Residues 353–355 (SAI) form a G5 region.

This sequence belongs to the TRAFAC class translation factor GTPase superfamily. Classic translation factor GTPase family. IF-2 subfamily.

The protein resides in the cytoplasm. In terms of biological role, one of the essential components for the initiation of protein synthesis. Protects formylmethionyl-tRNA from spontaneous hydrolysis and promotes its binding to the 30S ribosomal subunits. Also involved in the hydrolysis of GTP during the formation of the 70S ribosomal complex. This Alkaliphilus metalliredigens (strain QYMF) protein is Translation initiation factor IF-2.